We begin with the raw amino-acid sequence, 262 residues long: G patch domain-containing protein 11 (262 aa).

3 stretches are compositionally biased toward basic and acidic residues: residues 39-61 (LHKEKDIQNRQKSFKEQEKESRE), 114-127 (EEVKKRKADEELQN), and 136-165 (QHLEKKSIEDFRVRKRTEREERQTQGDLRK). 2 disordered regions span residues 39-71 (LHKEKDIQNRQKSFKEQEKESREAALQSSIGSQ) and 88-169 (GLGK…SQRA). The stretch at 41 to 62 (KEKDIQNRQKSFKEQEKESREA) forms a coiled coil. Residues 70 to 116 (SQNKGFALLQKMGYKAGQGLGKEGAGRVEPVPLNIKTDRGGIGMEEV) enclose the G-patch domain.

This sequence belongs to the GPATCH11 family.

It localises to the chromosome. It is found in the centromere. The protein localises to the kinetochore. This chain is G patch domain-containing protein 11 (gpatch11), found in Danio rerio (Zebrafish).